Here is a 211-residue protein sequence, read N- to C-terminus: MREKLKVYLVTGRYDFSDTEFLKRIETACRSGVTLVQLREKEVSTRRFYELAVKVKVVTDAYQIPLIINDRVDICLAVDAAGVHIGDDELPVALVRKLVGSTKIVGVSAKTVARGVEAENEGADYLGVGAIFPTTTKDSPLTSLQTLSEIAAAVTIPVVAIGGIKEENIEQLMGTGVAGVSLVSEIMLAEQITEKVQGLMRVTERMLEARK.

4-amino-2-methyl-5-(diphosphooxymethyl)pyrimidine contacts are provided by residues 37–41 and Asn-69; that span reads QLREK. Residues Asp-70 and Glu-89 each coordinate Mg(2+). Position 108 (Ser-108) interacts with 4-amino-2-methyl-5-(diphosphooxymethyl)pyrimidine. 134-136 is a binding site for 2-[(2R,5Z)-2-carboxy-4-methylthiazol-5(2H)-ylidene]ethyl phosphate; the sequence is TTT. Residue Lys-137 participates in 4-amino-2-methyl-5-(diphosphooxymethyl)pyrimidine binding. 2-[(2R,5Z)-2-carboxy-4-methylthiazol-5(2H)-ylidene]ethyl phosphate contacts are provided by residues Gly-163 and 183–184; that span reads VS.

Belongs to the thiamine-phosphate synthase family. It depends on Mg(2+) as a cofactor.

The enzyme catalyses 2-[(2R,5Z)-2-carboxy-4-methylthiazol-5(2H)-ylidene]ethyl phosphate + 4-amino-2-methyl-5-(diphosphooxymethyl)pyrimidine + 2 H(+) = thiamine phosphate + CO2 + diphosphate. It carries out the reaction 2-(2-carboxy-4-methylthiazol-5-yl)ethyl phosphate + 4-amino-2-methyl-5-(diphosphooxymethyl)pyrimidine + 2 H(+) = thiamine phosphate + CO2 + diphosphate. It catalyses the reaction 4-methyl-5-(2-phosphooxyethyl)-thiazole + 4-amino-2-methyl-5-(diphosphooxymethyl)pyrimidine + H(+) = thiamine phosphate + diphosphate. The protein operates within cofactor biosynthesis; thiamine diphosphate biosynthesis; thiamine phosphate from 4-amino-2-methyl-5-diphosphomethylpyrimidine and 4-methyl-5-(2-phosphoethyl)-thiazole: step 1/1. Condenses 4-methyl-5-(beta-hydroxyethyl)thiazole monophosphate (THZ-P) and 2-methyl-4-amino-5-hydroxymethyl pyrimidine pyrophosphate (HMP-PP) to form thiamine monophosphate (TMP). In Enterococcus faecalis (strain ATCC 700802 / V583), this protein is Thiamine-phosphate synthase.